The primary structure comprises 116 residues: Ribonuclease P protein component (116 aa).

Belongs to the RnpA family. As to quaternary structure, consists of a catalytic RNA component (M1 or rnpB) and a protein subunit.

The catalysed reaction is Endonucleolytic cleavage of RNA, removing 5'-extranucleotides from tRNA precursor.. RNaseP catalyzes the removal of the 5'-leader sequence from pre-tRNA to produce the mature 5'-terminus. It can also cleave other RNA substrates such as 4.5S RNA. The protein component plays an auxiliary but essential role in vivo by binding to the 5'-leader sequence and broadening the substrate specificity of the ribozyme. The sequence is that of Ribonuclease P protein component from Bacillus velezensis (strain DSM 23117 / BGSC 10A6 / LMG 26770 / FZB42) (Bacillus amyloliquefaciens subsp. plantarum).